Consider the following 307-residue polypeptide: MKRAGGGVDFISSLPDEILHHILANTPTKLAIRTSVLSKRWKHVWYETPSISIVCNRVDPDSLNKTLSSYSTPKIKSFDVTISRDVTVPEIDTWINLALSRKAENVSLRFTSHYRFRDTFFINSSLKQLSLTLVYCILNPKCVVSWSSLRNLSLNRCKVSDDSIAKILTGCSLLESLTLNLCDRLNDLDLSKSLSLRRLEILGDRWTPERIVAPHIRYLRLENYQRPSTLVDVSSLTEANLGLSKHVLDYFTCEMETESLQYMVRQTVVKLQNIKKLTIGGIFLQILSLAELCGVTLPVFQNSISKL.

The F-box domain maps to 8-54; it reads VDFISSLPDEILHHILANTPTKLAIRTSVLSKRWKHVWYETPSISIV.

The chain is F-box protein At5g03100 from Arabidopsis thaliana (Mouse-ear cress).